The sequence spans 878 residues: AP-2 complex subunit alpha (878 aa).

The protein belongs to the adaptor complexes large subunit family. As to quaternary structure, adaptor protein complex 2 (AP-2) is a heterotetramer composed of two large adaptins (alpha-type subunit apl3 and beta-type subunit apl1), a medium chain (mu-type subunit apm4) and a small adaptin (sigma-type subunit aps2).

The protein resides in the cell membrane. It is found in the membrane. It localises to the coated pit. Its function is as follows. Adaptins are components of the adaptor complexes which link clathrin to receptors in coated vesicles. Clathrin-associated protein complexes are believed to interact with the cytoplasmic tails of membrane proteins, leading to their selection and concentration. Alpha adaptin is a subunit of the plasma membrane adaptor. This chain is AP-2 complex subunit alpha (apl3), found in Schizosaccharomyces pombe (strain 972 / ATCC 24843) (Fission yeast).